The primary structure comprises 65 residues: UPF0434 protein Mpe_A2486 (65 aa).

The protein belongs to the UPF0434 family.

The chain is UPF0434 protein Mpe_A2486 from Methylibium petroleiphilum (strain ATCC BAA-1232 / LMG 22953 / PM1).